Here is a 551-residue protein sequence, read N- to C-terminus: Seed biotin-containing protein SBP65 (551 aa).

Positions 1 to 20 (MASEQLSRRENITTERKIQN) are enriched in basic and acidic residues. The disordered stretch occupies residues 1-29 (MASEQLSRRENITTERKIQNAEDSVPQRT). K103 is modified (N6-biotinyllysine; atypical). A coiled-coil region spans residues 141–211 (KGQVVEERER…RNTTQAAQEK (71 aa)). Disordered regions lie at residues 197–265 (TNET…YEAT) and 518–551 (DEVE…NNVS). The span at 206 to 219 (QAAQEKGEAAQAKD) shows a compositional bias: low complexity. 2 stretches are compositionally biased toward polar residues: residues 223–242 (EKTQ…SART) and 250–265 (AKNT…YEAT). The segment covering 533–544 (HSLDRAKHEGYR) has biased composition (basic and acidic residues).

The protein belongs to the seed biotin-containing protein SBP65 family. In terms of tissue distribution, expressed in dry mature seeds.

May serve as a biotin source for several growth-limiting enzymes that are necessary during seed development and the subsequent germination stages, and thus may play some roles in determining seed germination capacity. The protein is Seed biotin-containing protein SBP65 (SBP65) of Pisum sativum (Garden pea).